The chain runs to 345 residues: Probable fructokinase-3 (345 aa).

This sequence belongs to the carbohydrate kinase PfkB family.

The catalysed reaction is D-fructose + ATP = D-fructose 6-phosphate + ADP + H(+). The protein operates within glycan biosynthesis; starch biosynthesis. Its function is as follows. May play an important role in maintaining the flux of carbon towards starch formation. This chain is Probable fructokinase-3, found in Arabidopsis thaliana (Mouse-ear cress).